The following is a 92-amino-acid chain: MNKTQLINVISKKSNLSKIQAKLTLETTLSTIIDSLKKGESVQIVGFGTFKVNLRSSRTGRNPQTGKEIQIPATKVPSFTSGKTLKNAIKQL.

Belongs to the bacterial histone-like protein family. Homodimer.

Functionally, histone-like DNA-binding protein which is capable of wrapping DNA to stabilize it, and thus to prevent its denaturation under extreme environmental conditions. The sequence is that of DNA-binding protein HU (hup) from Buchnera aphidicola subsp. Acyrthosiphon pisum (strain APS) (Acyrthosiphon pisum symbiotic bacterium).